We begin with the raw amino-acid sequence, 212 residues long: ATP phosphoribosyltransferase (212 aa).

This sequence belongs to the ATP phosphoribosyltransferase family. Short subfamily. In terms of assembly, heteromultimer composed of HisG and HisZ subunits.

It is found in the cytoplasm. The enzyme catalyses 1-(5-phospho-beta-D-ribosyl)-ATP + diphosphate = 5-phospho-alpha-D-ribose 1-diphosphate + ATP. It functions in the pathway amino-acid biosynthesis; L-histidine biosynthesis; L-histidine from 5-phospho-alpha-D-ribose 1-diphosphate: step 1/9. In terms of biological role, catalyzes the condensation of ATP and 5-phosphoribose 1-diphosphate to form N'-(5'-phosphoribosyl)-ATP (PR-ATP). Has a crucial role in the pathway because the rate of histidine biosynthesis seems to be controlled primarily by regulation of HisG enzymatic activity. This chain is ATP phosphoribosyltransferase, found in Prochlorococcus marinus (strain MIT 9312).